The sequence spans 145 residues: Galectin-5 (145 aa).

Ser2 carries the N-acetylserine modification. One can recognise a Galectin domain in the interval 17–145 (FFTSIPNGLY…GDIQLTHVET (129 aa)). 77-83 (WGPEERS) provides a ligand contact to a beta-D-galactoside.

As to quaternary structure, monomer. As to expression, erythrocytes.

Functionally, may function in erythrocyte differentiation. The sequence is that of Galectin-5 (Lgals5) from Rattus norvegicus (Rat).